We begin with the raw amino-acid sequence, 432 residues long: Amino-acid acetyltransferase (432 aa).

The region spanning 286 to 425 (ELVREAAIED…ASLYNFQRNS (140 aa)) is the N-acetyltransferase domain.

It belongs to the acetyltransferase family. ArgA subfamily.

It localises to the cytoplasm. The enzyme catalyses L-glutamate + acetyl-CoA = N-acetyl-L-glutamate + CoA + H(+). It functions in the pathway amino-acid biosynthesis; L-arginine biosynthesis; N(2)-acetyl-L-ornithine from L-glutamate: step 1/4. The protein is Amino-acid acetyltransferase of Pseudomonas syringae pv. tomato (strain ATCC BAA-871 / DC3000).